We begin with the raw amino-acid sequence, 447 residues long: Tubulin beta-2 chain (447 aa).

GTP contacts are provided by Gln-11, Glu-69, Ser-138, Gly-142, Thr-143, Gly-144, Asn-204, and Asn-226. A Mg(2+)-binding site is contributed by Glu-69. The tract at residues 419–447 (VSEYQQYQDATADDEGEYEDEEEEADLQD) is disordered. The span at 429-447 (TADDEGEYEDEEEEADLQD) shows a compositional bias: acidic residues.

This sequence belongs to the tubulin family. As to quaternary structure, dimer of alpha and beta chains. A typical microtubule is a hollow water-filled tube with an outer diameter of 25 nm and an inner diameter of 15 nM. Alpha-beta heterodimers associate head-to-tail to form protofilaments running lengthwise along the microtubule wall with the beta-tubulin subunit facing the microtubule plus end conferring a structural polarity. Microtubules usually have 13 protofilaments but different protofilament numbers can be found in some organisms and specialized cells. Mg(2+) is required as a cofactor. In terms of tissue distribution, expressed in leaf sheaths and suspension cultured cells.

The protein resides in the cytoplasm. Its subcellular location is the cytoskeleton. Tubulin is the major constituent of microtubules, a cylinder consisting of laterally associated linear protofilaments composed of alpha- and beta-tubulin heterodimers. Microtubules grow by the addition of GTP-tubulin dimers to the microtubule end, where a stabilizing cap forms. Below the cap, tubulin dimers are in GDP-bound state, owing to GTPase activity of alpha-tubulin. The sequence is that of Tubulin beta-2 chain (TUBB2) from Oryza sativa subsp. japonica (Rice).